A 425-amino-acid chain; its full sequence is Histidine--tRNA ligase 1 (425 aa).

The protein belongs to the class-II aminoacyl-tRNA synthetase family. Homodimer.

The protein resides in the cytoplasm. The enzyme catalyses tRNA(His) + L-histidine + ATP = L-histidyl-tRNA(His) + AMP + diphosphate + H(+). In Bacillus anthracis, this protein is Histidine--tRNA ligase 1.